The primary structure comprises 72 residues: Aurein-2.5 (72 aa).

An N-terminal signal peptide occupies residues 1 to 22 (MAFLKKSLFLVLFLGLVSLSIC). A propeptide spanning residues 23-49 (EKEKRQNEEDEDENEAANHEEGSEEKR) is cleaved from the precursor. The interval 27 to 47 (RQNEEDEDENEAANHEEGSEE) is disordered. Basic and acidic residues predominate over residues 38 to 47 (AANHEEGSEE). L65 bears the Leucine amide mark. A propeptide spanning residues 69 to 72 (NDLE) is cleaved from the precursor.

This sequence belongs to the frog skin active peptide (FSAP) family. Aurein subfamily. In terms of assembly, may be monomeric or may oligomerize as homodimers or homotrimers in Gram-positive and Gram-negative bacteria mimetic membranes. Post-translationally, C-terminal amidation enhances antibacterial activity. This increase may be due to stabilization of the alpha-helical structure at the membrane interface. As to expression, expressed by the skin dorsal glands.

Its subcellular location is the secreted. It is found in the target cell membrane. Functionally, amphipathic alpha-helical antimicrobial peptide with moderate to potent activity against Gram-positive bacteria, Gram-negative bacteria and fungi. Also shows a weak activity against biofilm of both Gram-positive and Gram-negative bacteria. Probably acts by disturbing membrane functions with its amphipathic structure. Kills fungi via membranolytic action. Enhanced sterol levels in lipid composition membranes reduce interaction of this peptide with membranes, having a protective effect against the lytic ability of the peptide. Shows anticancer activity. This chain is Aurein-2.5, found in Ranoidea aurea (Green and golden bell frog).